The primary structure comprises 467 residues: Mitochondrial distribution and morphology protein 10 (467 aa).

The interval 361–393 is disordered; that stretch reads GLPDTAPSRNRECDDLPPPRRDNYHHQRSPHAS. The span at 369 to 385 shows a compositional bias: basic and acidic residues; sequence RNRECDDLPPPRRDNYH.

This sequence belongs to the MDM10 family. As to quaternary structure, component of the ER-mitochondria encounter structure (ERMES) or MDM complex, composed of MMM1, MDM10, MDM12 and MDM34. Associates with the mitochondrial outer membrane sorting assembly machinery SAM(core) complex.

It localises to the mitochondrion outer membrane. Its function is as follows. Component of the ERMES/MDM complex, which serves as a molecular tether to connect the endoplasmic reticulum and mitochondria. Components of this complex are involved in the control of mitochondrial shape and protein biogenesis and may function in phospholipid exchange. MDM10 is involved in the late assembly steps of the general translocase of the mitochondrial outer membrane (TOM complex). Functions in the TOM40-specific route of the assembly of outer membrane beta-barrel proteins, including the association of TOM40 with the receptor TOM22 and small TOM proteins. Can associate with the SAM(core) complex as well as the MDM12-MMM1 complex, both involved in late steps of the major beta-barrel assembly pathway, that is responsible for biogenesis of all outer membrane beta-barrel proteins. May act as a switch that shuttles between both complexes and channels precursor proteins into the TOM40-specific pathway. Plays a role in mitochondrial morphology and in the inheritance of mitochondria. This is Mitochondrial distribution and morphology protein 10 from Ajellomyces capsulatus (strain NAm1 / WU24) (Darling's disease fungus).